The following is a 653-amino-acid chain: MTANNPQNRYDYDVVVIGAGHAGTEAAAAAARLGAKTALLTTNLDTVGQMSCNPAIGGVAKGQIVREVDALGGLMGEAIDATGIQFRMLNRRKGPAMHSPRAQADKKAYQNFIKYRIETQDNLDLRQETVEDLITEPIADGQDRLANQRVIGVRVRGDAVYHAPTVILTTGTFLQAIMHTGKSQSAGGRAGEGTTAGLSGALKGMGFTLDRFKTGTPPRLNARTIDYSGLEEQPGDDDPQPFSYLNDAISSPQMACHIAHTNERVHDLIRANLDRAPMYSGQIDSRGPRYCPSIEDKVVRFADKSSHQLFLEPEGRQTCEVYVNGISTSLPRDVQDAMFRCIPGLEKAAIMRYGYAVEYDYCPPTQLWPHLESKSVSGLFFAGQINGTTGYEEAAGQGLIAGLNAARTAASKTPWVPSRQDAYIGVLVDDLVTSGTDEPYRMFTSRAEYRLLLRQDNADRRLTAQADELGLIDAARRERFHRKLAEIERGTELLQQAKFQPETGPTVRGDVYLRRPEVTWNVIAEQVPELAGIGREAAEQCSIDIKYAGYIDRQQAEVHKQSRHAEKSIPVSFDYDKIGPLRNEAKEKLTKVRPLNLGQAKRISGITPADLALVLAHLENNSLSQTKSSASVDKRASSDNESSRPTSSASDSL.

Residues 18 to 23, Val-130, and Thr-195 contribute to the FAD site; that span reads GAGHAG. Position 287–301 (287–301) interacts with NAD(+); that stretch reads GPRYCPSIEDKVVRF. Position 384 (Gln-384) interacts with FAD. Residues 624-653 form a disordered region; it reads SQTKSSASVDKRASSDNESSRPTSSASDSL. The segment covering 632–642 has biased composition (basic and acidic residues); it reads VDKRASSDNES. Positions 643–653 are enriched in polar residues; that stretch reads SRPTSSASDSL.

This sequence belongs to the MnmG family. In terms of assembly, homodimer. Heterotetramer of two MnmE and two MnmG subunits. FAD serves as cofactor.

It localises to the cytoplasm. Its function is as follows. NAD-binding protein involved in the addition of a carboxymethylaminomethyl (cmnm) group at the wobble position (U34) of certain tRNAs, forming tRNA-cmnm(5)s(2)U34. In Rhodopirellula baltica (strain DSM 10527 / NCIMB 13988 / SH1), this protein is tRNA uridine 5-carboxymethylaminomethyl modification enzyme MnmG.